Here is a 248-residue protein sequence, read N- to C-terminus: Triosephosphate isomerase (248 aa).

Substrate-binding residues include asparagine 10 and lysine 12. Histidine 95 serves as the catalytic Electrophile. Glutamate 165 functions as the Proton acceptor in the catalytic mechanism.

The protein belongs to the triosephosphate isomerase family. Homodimer.

It carries out the reaction D-glyceraldehyde 3-phosphate = dihydroxyacetone phosphate. The protein operates within carbohydrate biosynthesis; gluconeogenesis. It participates in carbohydrate degradation; glycolysis; D-glyceraldehyde 3-phosphate from glycerone phosphate: step 1/1. This is Triosephosphate isomerase (TPI1) from Debaryomyces hansenii (strain ATCC 36239 / CBS 767 / BCRC 21394 / JCM 1990 / NBRC 0083 / IGC 2968) (Yeast).